Reading from the N-terminus, the 208-residue chain is Heat shock protein 26 (208 aa).

Phosphoserine is present on residues Ser44, Ser52, and Ser58. Residues 71-179 form the sHSP domain; sequence ANRNDIHWPA…KSKERIIQIQ (109 aa). The segment at 187–208 is disordered; the sequence is NVKANESEVKGKENGAPNGKDK. A compositionally biased stretch (basic and acidic residues) spans 191–208; sequence NESEVKGKENGAPNGKDK.

Belongs to the small heat shock protein (HSP20) family.

This is Heat shock protein 26 (Hsp26) from Drosophila melanogaster (Fruit fly).